We begin with the raw amino-acid sequence, 467 residues long: Asparagine--tRNA ligase (467 aa).

It belongs to the class-II aminoacyl-tRNA synthetase family. As to quaternary structure, homodimer.

Its subcellular location is the cytoplasm. The catalysed reaction is tRNA(Asn) + L-asparagine + ATP = L-asparaginyl-tRNA(Asn) + AMP + diphosphate + H(+). The polypeptide is Asparagine--tRNA ligase (Mannheimia succiniciproducens (strain KCTC 0769BP / MBEL55E)).